Consider the following 212-residue polypeptide: Outer-membrane lipoprotein carrier protein (212 aa).

The signal sequence occupies residues 1–25; that stretch reads MRKRILVSACAALAVFAAHMPTALA.

Belongs to the LolA family. Monomer.

The protein localises to the periplasm. Its function is as follows. Participates in the translocation of lipoproteins from the inner membrane to the outer membrane. Only forms a complex with a lipoprotein if the residue after the N-terminal Cys is not an aspartate (The Asp acts as a targeting signal to indicate that the lipoprotein should stay in the inner membrane). The chain is Outer-membrane lipoprotein carrier protein from Cupriavidus pinatubonensis (strain JMP 134 / LMG 1197) (Cupriavidus necator (strain JMP 134)).